The sequence spans 180 residues: UPF0227 protein YpsIP31758_1593 (180 aa).

This sequence belongs to the UPF0227 family.

The chain is UPF0227 protein YpsIP31758_1593 from Yersinia pseudotuberculosis serotype O:1b (strain IP 31758).